The primary structure comprises 251 residues: Lactose phosphotransferase system repressor (251 aa).

The HTH deoR-type domain maps to 3-58; that stretch reads KHERLDEIAKLVNKKGTIRTNEIVEGLNVSDMTVRRDLIELENKGILTKIHGGARS. The segment at residues 20–39 is a DNA-binding region (H-T-H motif); sequence IRTNEIVEGLNVSDMTVRRD.

Repressor of the lactose catabolism operon. Galactose-6-phosphate is the inducer. The polypeptide is Lactose phosphotransferase system repressor (lacR) (Staphylococcus aureus (strain MRSA252)).